The following is a 423-amino-acid chain: Glutamate-1-semialdehyde 2,1-aminomutase (423 aa).

Lys258 is modified (N6-(pyridoxal phosphate)lysine).

This sequence belongs to the class-III pyridoxal-phosphate-dependent aminotransferase family. HemL subfamily. Pyridoxal 5'-phosphate serves as cofactor.

It localises to the cytoplasm. It catalyses the reaction (S)-4-amino-5-oxopentanoate = 5-aminolevulinate. It functions in the pathway porphyrin-containing compound metabolism; protoporphyrin-IX biosynthesis; 5-aminolevulinate from L-glutamyl-tRNA(Glu): step 2/2. The polypeptide is Glutamate-1-semialdehyde 2,1-aminomutase (Pyrobaculum aerophilum (strain ATCC 51768 / DSM 7523 / JCM 9630 / CIP 104966 / NBRC 100827 / IM2)).